The primary structure comprises 430 residues: Proteinase-activated receptor 1 (430 aa).

Positions 1-21 (MGPRRLLIVALGLSLCGPLLS) are cleaved as a signal peptide. The propeptide at 22–41 (SRVPMSQPESERTDATVNPR) is removed for receptor activation. Over 42 to 107 (SFFLRNPSEN…SGYLTSPWLT (66 aa)) the chain is Extracellular. N67 and N80 each carry an N-linked (GlcNAc...) asparagine glycan. A helical membrane pass occupies residues 108-133 (LFMPSVYTIVFIVSLPLNVLAIAVFV). At 134–142 (LRMKVKKPA) the chain is on the cytoplasmic side. Residues 143-162 (VVYMLHLAMADVLFVSVLPF) traverse the membrane as a helical segment. Topologically, residues 163 to 181 (KISYYFSGTDWQFGSGMCR) are extracellular. Cysteines 180 and 259 form a disulfide. The helical transmembrane segment at 182 to 203 (FATAAFYGNMYASIMLMTVISI) threads the bilayer. At 204–223 (DRFLAVVYPIQSLSWRTLGR) the chain is on the cytoplasmic side. Residues 224–244 (ANFTCVVIWVMAIMGVVPLLL) traverse the membrane as a helical segment. Topologically, residues 245–273 (KEQTTRVPGLNITTCHDVLSENLMQGFYS) are extracellular. N-linked (GlcNAc...) asparagine glycosylation is present at N255. A helical membrane pass occupies residues 274–293 (YYFSAFSAIFFLVPLIVSTV). At 294-316 (CYTSIIRCLSSSAVANRSKKSRA) the chain is on the cytoplasmic side. The helical transmembrane segment at 317 to 339 (LFLSAAVFCIFIVCFGPTNVLLI) threads the bilayer. The Extracellular segment spans residues 340-354 (VHYLFLSDSPGTEAA). A helical transmembrane segment spans residues 355 to 379 (YFAYLLCVCVSSVSCCIDPLIYYYA). Residues 380–430 (SSECQRHLYSILCCKESSDPNSCNSTGQLMPSKMDTCSSHLNNSIYKKLLA) are Cytoplasmic-facing. S423 is subject to Phosphoserine.

The protein belongs to the G-protein coupled receptor 1 family. Proteolytic cleavage by thrombin generates a new N-terminus that functions as a tethered ligand. Also proteolytically cleaved by cathepsin CTSG. Post-translationally, phosphorylated in the C-terminal tail; probably mediating desensitization prior to the uncoupling and internalization of the receptor.

The protein localises to the cell membrane. Functionally, high affinity receptor that binds the activated thrombin, leading to calcium release from intracellular stores. The thrombin-activated receptor signaling pathway is mediated through PTX-insensitive G proteins, activation of phospholipase C resulting in the production of 1D-myo-inositol 1,4,5-trisphosphate (InsP3) which binds to InsP3 receptors causing calcium release from the stores. In astrocytes, the calcium released into the cytosol allows the Ca(2+)-dependent release of L-glutamate into the synaptic cleft through BEST1, that targets the neuronal postsynaptic GRIN2A/NMDAR receptor resulting in the synaptic plasticity regulation. May play a role in platelets activation and in vascular development. Mediates up-regulation of pro-inflammatory cytokines, such as MCP-1/CCL2 and IL6, triggered by coagulation factor Xa (F10) in cardiac fibroblasts and umbilical vein endothelial cells. This is Proteinase-activated receptor 1 from Mus musculus (Mouse).